The primary structure comprises 2065 residues: Cytoskeleton-associated protein 5-A (2065 aa).

TOG regions lie at residues 1–240 (MGDD…DLKA) and 264–515 (VDAY…KETK). HEAT repeat units lie at residues 120–157 (EKAE…EFGS), 160–197 (MTLK…WIRD), 270–311 (LEAV…NPKI), 314–352 (GDFA…GLRK), 356–393 (SYAG…TTTL), 395–432 (NISE…STLP), and 436–477 (LKPF…VNPF). Residues 500 to 574 (NGKKGGAAAG…GATAKGKKAV (75 aa)) are disordered. Low complexity predominate over residues 538-568 (KAAAAPKKAPAAKPGGPVKKAKAPASSGATA). Residues 644-808 (KPGFKETNFQ…LSQIDAEFEK (165 aa)) form a TOG 3 region. 2 HEAT repeats span residues 652-689 (FQVM…KVGD) and 748-785 (INVK…YMGA). Residues 809–849 (MKGQTPPVSIRGSKHGSGRDEGEEGEEQDEDAPADVTDLLP) form a disordered region. Over residues 829-841 (EGEEGEEQDEDAP) the composition is skewed to acidic residues. The TOG 4 stretch occupies residues 846-1090 (DLLPRTDISD…AGPPGKASSK (245 aa)). HEAT repeat units follow at residues 852-889 (DISD…EAKF), 892-929 (PSIG…AMGH), 933-970 (QHVK…QTGM), and 1015-1052 (CVPY…KMSK). The span at 1074–1115 (ASMPAKPAGPPGKASSKQPPAVAQASASPPPAASSDSGSSTS) shows a compositional bias: low complexity. The disordered stretch occupies residues 1074–1192 (ASMPAKPAGP…AKDEEDKSGP (119 aa)). Residues 1126–1163 (PGTQASKAKTQSVSSEGNTSLNPSNTSLTPSKANTSLS) show a composition bias toward polar residues. An interaction with microtubule lattice region spans residues 1150–1235 (NTSLTPSKAN…IEQLKTQMSP (86 aa)). Positions 1191-1460 (GPIYIIVPNG…ERIKRAGKKQ (270 aa)) are TOG 5. 5 HEAT repeats span residues 1251-1288 (QRQI…RFFD), 1295-1318 (MKCL…LTEM), 1319-1355 (EGTS…VYPA), 1357-1390 (KMFN…SYGM), and 1395-1432 (PTPA…VHGE). Disordered stretches follow at residues 1982–2001 (DNAK…KSSA) and 2028–2065 (VELD…SSRK). The interval 2002–2065 (PAVVSSTDML…RLERIKSSRK (64 aa)) is interaction with tacc3. Low complexity predominate over residues 2038-2048 (STTTSSSASST). A compositionally biased stretch (basic and acidic residues) spans 2051 to 2065 (DDLKKRLERIKSSRK).

It belongs to the TOG/XMAP215 family. Interacts with tacc3; two molecules of ckap5 interact with 1 molecule of tacc3 probably mediated by coiled coil domains forming a four-helix bundle. Interacts with tacc3 and clathrin forming the TACC3/ch-TOG/clathrin complex located at spindle inter-microtubules bridges. Interacts with ndc80; indicative for an association with the NDC80 comnplex.

It localises to the cytoplasm. The protein resides in the cytoskeleton. It is found in the spindle pole. Its subcellular location is the spindle. The protein localises to the microtubule organizing center. It localises to the centrosome. The protein resides in the chromosome. It is found in the centromere. Its subcellular location is the kinetochore. In terms of biological role, binds to the plus end of microtubules and regulates microtubule dynamics and microtubule organization. Acts as a processive microtubule polymerase. Promotes cytoplasmic microtubule nucleation and elongation. Plays a major role in organizing spindle poles. In spindle formation protects kinetochore microtubules from depolymerization by kif2c and has an essential role in centrosomal microtubule assembly independently of kif2c activity. Contributes to centrosome integrity. Acts as a component of the TACC3/ch-TOG/clathrin complex proposed to contribute to stabilization of kinetochore fibers of the mitotic spindle by acting as inter-microtubule bridge. Enhances the strength of NDC80 complex-mediated kinetochore-tip microtubule attachments. The sequence is that of Cytoskeleton-associated protein 5-A (ckap5-a) from Xenopus laevis (African clawed frog).